We begin with the raw amino-acid sequence, 156 residues long: Ribosome maturation factor RimP (156 aa).

This sequence belongs to the RimP family.

The protein resides in the cytoplasm. Functionally, required for maturation of 30S ribosomal subunits. This chain is Ribosome maturation factor RimP, found in Bacillus cytotoxicus (strain DSM 22905 / CIP 110041 / 391-98 / NVH 391-98).